Reading from the N-terminus, the 210-residue chain is uncharacterized protein (210 aa).

Residues 90-193 (KPDQIIVNEY…RISITFRNVI (104 aa)) enclose the Fe2OG dioxygenase domain.

This is an uncharacterized protein from Acanthamoeba polyphaga (Amoeba).